Here is an 841-residue protein sequence, read N- to C-terminus: Auxin response factor 24 (841 aa).

The segment at 109-140 is disordered; sequence LPEKQQDGNGSGNGNVSKDKVEEEEVVPPAAT. Residues 148–250 constitute a DNA-binding region (TF-B3); it reads FCKTLTASDT…ELRVGVRRAM (103 aa). Disordered regions lie at residues 366 to 397, 663 to 715, and 804 to 841; these read PRPD…KRAR, QDAL…SRSC, and GALN…SENC. Basic and acidic residues predominate over residues 684 to 695; that stretch reads AQHDSAREKHQS. 2 stretches are compositionally biased toward polar residues: residues 701-713 and 830-841; these read KNIQ…GSSR and GLSTPSLNSENC. In terms of domain architecture, PB1 spans 713–797; sequence RSCKKVHKQG…HKIFIYTREE (85 aa).

This sequence belongs to the ARF family. Homodimers and heterodimers. As to expression, expressed in roots, culms, leaves and young panicles.

It localises to the nucleus. Auxin response factors (ARFs) are transcriptional factors that bind specifically to the DNA sequence 5'-TGTCTC-3' found in the auxin-responsive promoter elements (AuxREs). This is Auxin response factor 24 (ARF24) from Oryza sativa subsp. japonica (Rice).